The primary structure comprises 145 residues: Putative antiporter subunit mnhG2 (145 aa).

Helical transmembrane passes span 11–31 (IAAVMLLLGSFIALISAIGIV), 51–71 (VLLTLIGVLIYFIVNTGFFSV), and 72–92 (RLLLSLVFINLTSPVGMHLVA).

This sequence belongs to the CPA3 antiporters (TC 2.A.63) subunit G family. As to quaternary structure, may form a heterooligomeric complex that consists of seven subunits: mnhA2, mnhB2, mnhC2, mnhD2, mnhE2, mnhF2 and mnhG2.

It localises to the cell membrane. The protein is Putative antiporter subunit mnhG2 (mnhG2) of Staphylococcus aureus (strain MRSA252).